Consider the following 440-residue polypeptide: NADH-quinone oxidoreductase subunit D 1 (440 aa).

The protein belongs to the complex I 49 kDa subunit family. As to quaternary structure, NDH-1 is composed of 14 different subunits. Subunits NuoB, C, D, E, F, and G constitute the peripheral sector of the complex.

It is found in the cell inner membrane. The enzyme catalyses a quinone + NADH + 5 H(+)(in) = a quinol + NAD(+) + 4 H(+)(out). Its function is as follows. NDH-1 shuttles electrons from NADH, via FMN and iron-sulfur (Fe-S) centers, to quinones in the respiratory chain. The immediate electron acceptor for the enzyme in this species is believed to be a menaquinone. Couples the redox reaction to proton translocation (for every two electrons transferred, four hydrogen ions are translocated across the cytoplasmic membrane), and thus conserves the redox energy in a proton gradient. This is NADH-quinone oxidoreductase subunit D 1 from Chloroherpeton thalassium (strain ATCC 35110 / GB-78).